The sequence spans 210 residues: MTVWVGLTGGIGSGKSAAAQCFADLGVPRIDADAAAHSLTASDGIALPEIRRLFGDTVFDTQGLLRRDILRKEVFASPSRKALLESVMLPLIFSEIKKQQETFTDAAYGIVEIPLLTEKRQFISLIRRVLTISAPVEKRIGRVMARSGLTRGEVAAVISHQASESERLLLADDVLLNDGSLKSLREKTMRLHAFYSGIFASKPTQGKHND.

The DPCK domain occupies 4–202 (WVGLTGGIGS…AFYSGIFASK (199 aa)). 12–17 (GSGKSA) serves as a coordination point for ATP.

This sequence belongs to the CoaE family.

The protein localises to the cytoplasm. It catalyses the reaction 3'-dephospho-CoA + ATP = ADP + CoA + H(+). It participates in cofactor biosynthesis; coenzyme A biosynthesis; CoA from (R)-pantothenate: step 5/5. Functionally, catalyzes the phosphorylation of the 3'-hydroxyl group of dephosphocoenzyme A to form coenzyme A. In Neisseria meningitidis serogroup B (strain ATCC BAA-335 / MC58), this protein is Dephospho-CoA kinase.